The chain runs to 101 residues: Therostasin (101 aa).

Positions 1–19 (MRGLAVLLLVACFCSVAFG) are cleaved as a signal peptide. Antistasin-like domains are found at residues 21 to 46 (CENT…TCLC) and 49 to 75 (CNDA…FCTC).

As to expression, salivary glands.

Its subcellular location is the secreted. Its function is as follows. Potent inhibitor of factor Xa. It also inhibits trypsin in a weaker manner. The sequence is that of Therostasin from Theromyzon tessulatum (Duck leech).